Here is a 325-residue protein sequence, read N- to C-terminus: GMP reductase (325 aa).

The Thioimidate intermediate role is filled by Cys173. Residue 202 to 225 (IIADGGIHEHGDIAKSIRFGATMV) coordinates NADP(+).

The protein belongs to the IMPDH/GMPR family. GuaC type 2 subfamily.

The catalysed reaction is IMP + NH4(+) + NADP(+) = GMP + NADPH + 2 H(+). Functionally, catalyzes the irreversible NADPH-dependent deamination of GMP to IMP. It functions in the conversion of nucleobase, nucleoside and nucleotide derivatives of G to A nucleotides, and in maintaining the intracellular balance of A and G nucleotides. The polypeptide is GMP reductase (Albidiferax ferrireducens (strain ATCC BAA-621 / DSM 15236 / T118) (Rhodoferax ferrireducens)).